The sequence spans 325 residues: Dimethylallyltranstransferase (325 aa).

2 residues coordinate isopentenyl diphosphate: Arg54 and His84. Positions 91 and 95 each coordinate Mg(2+). The short motif at 91-95 (DRVVD) is the DDXXD motif element. Arg101 serves as a coordination point for isopentenyl diphosphate. The short motif at 217–221 (RDIIA) is the DDXXD motif element.

This sequence belongs to the FPP/GGPP synthase family. The cofactor is Mg(2+).

The catalysed reaction is isopentenyl diphosphate + dimethylallyl diphosphate = (2E)-geranyl diphosphate + diphosphate. It functions in the pathway isoprenoid biosynthesis; geranyl diphosphate biosynthesis; geranyl diphosphate from dimethylallyl diphosphate and isopentenyl diphosphate: step 1/1. Functionally, catalyzes the addition of isopentenyl diphosphate (IPP) onto dimethylallyl diphosphate (DMAPP) to form geranyl pyrophosphate (GPP). Is probably involved in the biosynthesis of decaprenyl diphosphate, which is required for mycobacterial cell wall synthesis. Could be required for host endothelial-cell invasion and/or intracellular survival. The chain is Dimethylallyltranstransferase from Mycobacterium tuberculosis (strain ATCC 25618 / H37Rv).